The primary structure comprises 158 residues: MVDVEGKYSPRLANKRGAARLAAVQALYQMDIVGSGVMETAAEYEAYRLGKDIDGDQYLDADFQWFLAIITGVVKDQKQLDPMLNQQLSAEWSLSRLDSILRAILRAGLWELINRQDVPIAVVMSEYVDIAKAFFEGDEPKLVNAILDSMAKKIRLLK.

It belongs to the NusB family.

In terms of biological role, involved in transcription antitermination. Required for transcription of ribosomal RNA (rRNA) genes. Binds specifically to the boxA antiterminator sequence of the ribosomal RNA (rrn) operons. In Bartonella henselae (strain ATCC 49882 / DSM 28221 / CCUG 30454 / Houston 1) (Rochalimaea henselae), this protein is Transcription antitermination protein NusB.